The chain runs to 435 residues: Serine--tRNA ligase (435 aa).

238 to 240 (TAE) contributes to the L-serine binding site. 269–271 (RAE) provides a ligand contact to ATP. L-serine is bound at residue glutamate 292. 356-359 (EISS) serves as a coordination point for ATP. Serine 392 provides a ligand contact to L-serine.

It belongs to the class-II aminoacyl-tRNA synthetase family. Type-1 seryl-tRNA synthetase subfamily. As to quaternary structure, homodimer. The tRNA molecule binds across the dimer.

It is found in the cytoplasm. The catalysed reaction is tRNA(Ser) + L-serine + ATP = L-seryl-tRNA(Ser) + AMP + diphosphate + H(+). It catalyses the reaction tRNA(Sec) + L-serine + ATP = L-seryl-tRNA(Sec) + AMP + diphosphate + H(+). It participates in aminoacyl-tRNA biosynthesis; selenocysteinyl-tRNA(Sec) biosynthesis; L-seryl-tRNA(Sec) from L-serine and tRNA(Sec): step 1/1. Its function is as follows. Catalyzes the attachment of serine to tRNA(Ser). Is also able to aminoacylate tRNA(Sec) with serine, to form the misacylated tRNA L-seryl-tRNA(Sec), which will be further converted into selenocysteinyl-tRNA(Sec). The protein is Serine--tRNA ligase of Methylobacterium sp. (strain 4-46).